A 211-amino-acid polypeptide reads, in one-letter code: MGVTCVSQVPLAEGKSVQQTVEILTRKLEQLGAEKQGTFYVDCETYHTAGASMGTPGQAGKLLYVMHNSEYPLSTFALFENGPCLVADLNLDVLMVKLKGFFQNAKANKMETRGTRYQYCDFLVKIGTVTVGQSGRGITVEVDYCPCAVPGDCWNLMMEFMQSFMGSHAPSVPPVFSAKHDPLYTPADTMVQYMELLNKIRKQQVTVAGMR.

It belongs to the Mediator complex subunit 20 family. As to quaternary structure, component of the Mediator complex.

Its subcellular location is the nucleus. Functionally, component of the Mediator complex, a coactivator involved in the regulated transcription of nearly all RNA polymerase II-dependent genes. Mediator functions as a bridge to convey information from gene-specific regulatory proteins to the basal RNA polymerase II transcription machinery. Mediator is recruited to promoters by direct interactions with regulatory proteins and serves as a scaffold for the assembly of a functional preinitiation complex with RNA polymerase II and the general transcription factors. The polypeptide is Mediator of RNA polymerase II transcription subunit 20 (med20) (Xenopus laevis (African clawed frog)).